We begin with the raw amino-acid sequence, 583 residues long: Long-chain-fatty-acid--AMP ligase FadD26 (583 aa).

The protein belongs to the ATP-dependent AMP-binding enzyme family.

The enzyme catalyses holo-[(phenol)carboxyphthiodiolenone synthase] + a long-chain fatty acid + ATP = a long-chain fatty acyl-[(phenol)carboxyphthiodiolenone synthase] + AMP + diphosphate. It catalyses the reaction eicosanoate + holo-[(phenol)carboxyphthiodiolenone synthase] + ATP = icosanoyl-[(phenol)carboxyphthiodiolenone synthase] + AMP + diphosphate. It carries out the reaction holo-[(phenol)carboxyphthiodiolenone synthase] + docosanoate + ATP = docosanoyl-[(phenol)carboxyphthiodiolenone synthase] + AMP + diphosphate. It participates in lipid metabolism; fatty acid biosynthesis. Catalyzes the activation of long-chain fatty acids as acyl-adenylates (acyl-AMP), which are then transferred to the multifunctional polyketide synthase PpsA for further chain extension. Catalyzes the adenylation of the long-chain fatty acids eicosanoate (C20) or docosanoate (C22), and potentially the very-long-chain fatty acid lignocerate (C24). Involved in the biosynthesis of phthiocerol dimycocerosate (DIM A) and phthiodiolone dimycocerosate (DIM B). The chain is Long-chain-fatty-acid--AMP ligase FadD26 (fadD26) from Mycobacterium tuberculosis (strain CDC 1551 / Oshkosh).